A 251-amino-acid polypeptide reads, in one-letter code: Transcription initiation factor TFIID subunit 9B (251 aa).

M1 carries the N-acetylmethionine modification. S147 is subject to Phosphoserine. Residues T159 and T174 each carry the phosphothreonine modification. S177 is modified (phosphoserine). The segment at 229–251 (QNTANEANPLKRKHEDDDDNDIM) is disordered.

The protein belongs to the TAF9 family. Binds TAF5 and TAF6. Component of TFIID and the TATA-binding protein-free TAF complex (TFTC). TFIID is composed of TATA binding protein (TBP) and a number of TBP-associated factors (TAFs). Binds N-terminal domain of p53/TP53 which is essential for transcription.

It is found in the nucleus. Its function is as follows. Essential for cell viability. TAF9 and TAF9B are involved in transcriptional activation as well as repression of distinct but overlapping sets of genes. May have a role in gene regulation associated with apoptosis. TAFs are components of the transcription factor IID (TFIID) complex, the TBP-free TAFII complex (TFTC), the PCAF histone acetylase complex and the STAGA transcription coactivator-HAT complex. TFIID or TFTC are essential for the regulation of RNA polymerase II-mediated transcription. The sequence is that of Transcription initiation factor TFIID subunit 9B (TAF9B) from Homo sapiens (Human).